The sequence spans 492 residues: Regulatory protein ViaA (492 aa).

It belongs to the ViaA family. As to quaternary structure, homodimer. Interacts with RavA.

It is found in the cytoplasm. Its function is as follows. Component of the RavA-ViaA chaperone complex, which may act on the membrane to optimize the function of some of the respiratory chains. ViaA stimulates the ATPase activity of RavA. The protein is Regulatory protein ViaA of Pectobacterium atrosepticum (strain SCRI 1043 / ATCC BAA-672) (Erwinia carotovora subsp. atroseptica).